The sequence spans 376 residues: E3 ubiquitin-protein ligase RNF133 (376 aa).

The PA domain maps to 65–167; that stretch reads SSTLKRVAGV…LKGTEIFHLI (103 aa). Residues 190–210 form a helical membrane-spanning segment; sequence YLVSFVIVTTATLAYFIFYHI. Residues 256–297 form an RING-type; atypical zinc finger; it reads CVICFERYKPNDIVRILTCKHFFHKNCIDPWILPHGTCPICK. The disordered stretch occupies residues 327–376; sequence ETLSPSEEETNNEVSPAGTSDKVIHVEENPTSQNNDIQPHSVVEDVHPSP. The span at 355-364 shows a compositional bias: polar residues; sequence NPTSQNNDIQ.

Interacts with E3 ligase UBE2J1. In terms of processing, auto-ubiquitinated. In terms of tissue distribution, expression is testis-specific.

Its subcellular location is the endoplasmic reticulum membrane. It carries out the reaction S-ubiquitinyl-[E2 ubiquitin-conjugating enzyme]-L-cysteine + [acceptor protein]-L-lysine = [E2 ubiquitin-conjugating enzyme]-L-cysteine + N(6)-ubiquitinyl-[acceptor protein]-L-lysine.. It functions in the pathway protein modification; protein ubiquitination. Functionally, has E3 ubiquitin-protein ligase activity. Plays a role in male fecundity through the interaction with the E2 ubituitin-protein ligase UBE2J1. This Homo sapiens (Human) protein is E3 ubiquitin-protein ligase RNF133.